A 122-amino-acid chain; its full sequence is Large ribosomal subunit protein uL14 (122 aa).

It belongs to the universal ribosomal protein uL14 family. Part of the 50S ribosomal subunit. Forms a cluster with proteins L3 and L19. In the 70S ribosome, L14 and L19 interact and together make contacts with the 16S rRNA in bridges B5 and B8.

Functionally, binds to 23S rRNA. Forms part of two intersubunit bridges in the 70S ribosome. This is Large ribosomal subunit protein uL14 from Colwellia psychrerythraea (strain 34H / ATCC BAA-681) (Vibrio psychroerythus).